A 339-amino-acid polypeptide reads, in one-letter code: Ketol-acid reductoisomerase (NADP(+)) (339 aa).

In terms of domain architecture, KARI N-terminal Rossmann spans 1 to 182 (MKIYYEKDAD…GNTRAGVIET (182 aa)). NADP(+) is bound by residues 24-27 (YGSQ), Ser51, Ser53, and 83-86 (DEKQ). His108 is an active-site residue. Gly134 serves as a coordination point for NADP(+). Positions 183 to 328 (SFREETETDL…EKLRGMMHWA (146 aa)) constitute a KARI C-terminal knotted domain. 4 residues coordinate Mg(2+): Asp191, Glu195, Glu227, and Glu231. Ser252 is a substrate binding site.

It belongs to the ketol-acid reductoisomerase family. Mg(2+) is required as a cofactor.

It carries out the reaction (2R)-2,3-dihydroxy-3-methylbutanoate + NADP(+) = (2S)-2-acetolactate + NADPH + H(+). It catalyses the reaction (2R,3R)-2,3-dihydroxy-3-methylpentanoate + NADP(+) = (S)-2-ethyl-2-hydroxy-3-oxobutanoate + NADPH + H(+). Its pathway is amino-acid biosynthesis; L-isoleucine biosynthesis; L-isoleucine from 2-oxobutanoate: step 2/4. It functions in the pathway amino-acid biosynthesis; L-valine biosynthesis; L-valine from pyruvate: step 2/4. Its function is as follows. Involved in the biosynthesis of branched-chain amino acids (BCAA). Catalyzes an alkyl-migration followed by a ketol-acid reduction of (S)-2-acetolactate (S2AL) to yield (R)-2,3-dihydroxy-isovalerate. In the isomerase reaction, S2AL is rearranged via a Mg-dependent methyl migration to produce 3-hydroxy-3-methyl-2-ketobutyrate (HMKB). In the reductase reaction, this 2-ketoacid undergoes a metal-dependent reduction by NADPH to yield (R)-2,3-dihydroxy-isovalerate. The chain is Ketol-acid reductoisomerase (NADP(+)) from Hyphomonas neptunium (strain ATCC 15444).